A 578-amino-acid chain; its full sequence is Laccase-10 (578 aa).

Positions 1–29 are cleaved as a signal peptide; sequence MGARCLALLLLYGTLLLLLLLPQLPLAGA. Plastocyanin-like domains follow at residues 37-153 and 163-319; these read NVKL…PKAG and KDVP…YAPP. N-linked (GlcNAc...) asparagine glycans are attached at residues Asn-42 and Asn-83. His-87 and His-89 together coordinate Cu cation. An N-linked (GlcNAc...) asparagine glycan is attached at Asn-119. The Cu cation site is built by His-132 and His-134. N-linked (GlcNAc...) asparagine glycans are attached at residues Asn-192, Asn-208, Asn-244, Asn-307, Asn-336, Asn-384, Asn-392, Asn-402, Asn-438, Asn-445, Asn-448, Asn-451, and Asn-461. The 135-residue stretch at 428–562 folds into the Plastocyanin-like 3 domain; that stretch reads DFPASPLEPF…KMAWVVNDGP (135 aa). Positions 479, 482, 484, 541, 542, 543, and 547 each coordinate Cu cation.

Belongs to the multicopper oxidase family. Cu cation is required as a cofactor.

The protein resides in the secreted. Its subcellular location is the extracellular space. It localises to the apoplast. The catalysed reaction is 4 hydroquinone + O2 = 4 benzosemiquinone + 2 H2O. Lignin degradation and detoxification of lignin-derived products. The polypeptide is Laccase-10 (LAC10) (Oryza sativa subsp. japonica (Rice)).